The following is a 695-amino-acid chain: FMR1-interacting protein NUFIP2 (695 aa).

The interval Met1–Asn100 is disordered. Composition is skewed to basic residues over residues Gln11–Pro23 and Pro30–Gln53. Lys78 participates in a covalent cross-link: Glycyl lysine isopeptide (Lys-Gly) (interchain with G-Cter in SUMO2). Residue Thr87 is modified to Phosphothreonine. Lys109 is covalently cross-linked (Glycyl lysine isopeptide (Lys-Gly) (interchain with G-Cter in SUMO2)). 2 positions are modified to phosphoserine: Ser112 and Ser113. Glycyl lysine isopeptide (Lys-Gly) (interchain with G-Cter in SUMO2) cross-links involve residues Lys136, Lys146, Lys157, and Lys171. 4 disordered regions span residues Ile155–Gly189, Gly204–Cys234, Phe261–Pro341, and Thr369–Pro402. The segment covering Ser159–Asp182 has biased composition (basic and acidic residues). Phosphoserine is present on residues Ser212 and Ser214. Tyr218 is modified (phosphotyrosine). Phosphothreonine occurs at positions 219 and 220. A compositionally biased stretch (basic residues) spans Pro221–Ser230. Over residues Phe261–Gly275 the composition is skewed to basic and acidic residues. Residues Lys262 and Lys281 each participate in a glycyl lysine isopeptide (Lys-Gly) (interchain with G-Cter in SUMO2) cross-link. Arg291 is subject to Omega-N-methylarginine. Residue Lys293 forms a Glycyl lysine isopeptide (Lys-Gly) (interchain with G-Cter in SUMO2) linkage. Ser304 is subject to Phosphoserine. A Glycyl lysine isopeptide (Lys-Gly) (interchain with G-Cter in SUMO2) cross-link involves residue Lys307. Residues Ser373–Ser396 are compositionally biased toward low complexity. Phosphoserine is present on Ser376. Thr571 is subject to Phosphothreonine. A phosphoserine mark is found at Ser572, Ser592, Ser608, and Ser629. Thr633 carries the phosphothreonine modification. Phosphoserine occurs at positions 637, 652, 655, and 692.

Interacts with FMR1 (via N-terminus). Interacts with DDX6.

Its subcellular location is the nucleus. It localises to the cytoplasm. The protein localises to the stress granule. Its function is as follows. Binds RNA. This is FMR1-interacting protein NUFIP2 from Homo sapiens (Human).